The sequence spans 242 residues: MSGHSKWHNIQGRKNAQDAKRGKIFQKISREIYMVAKSGGPDPDGNPQLRLIMDKARAANMPKDNIKRAIDKATGTGGADYEEITYEGYGPAGVAILVHALTDNRNRTASAVRADFNRNGGNLGETGSVSFMFDRKGYIAIAREDLEVDEDQMFEDVIEAGGEDLQTSDEVFEIYTDPKAFADVRDELQKKYDLATAELTMVPQNTVPVPADKVEQLQRLIDRLEDEDDVSEVYTSADFPED.

Positions 1–21 are disordered; that stretch reads MSGHSKWHNIQGRKNAQDAKR.

The protein belongs to the TACO1 family.

The protein localises to the cytoplasm. In Ligilactobacillus salivarius (strain UCC118) (Lactobacillus salivarius), this protein is Probable transcriptional regulatory protein LSL_0422.